The chain runs to 428 residues: Bifunctional protein GlmU (428 aa).

The tract at residues 1–221 (MDIVILAAGC…ERKAMGINTR (221 aa)) is pyrophosphorylase. UDP-N-acetyl-alpha-D-glucosamine contacts are provided by residues 6 to 9 (LAAG), lysine 20, glutamine 74, 79 to 80 (GT), 103 to 105 (YGD), glycine 140, and asparagine 219. Aspartate 105 lines the Mg(2+) pocket. Residue asparagine 219 coordinates Mg(2+). The segment at 222–242 (ADLAIAESYFQCMKRASFLQS) is linker. The segment at 243–428 (GVTLTSPDQV…TTKPEYKTRR (186 aa)) is N-acetyltransferase. UDP-N-acetyl-alpha-D-glucosamine contacts are provided by arginine 308 and lysine 326. Histidine 338 functions as the Proton acceptor in the catalytic mechanism. Positions 341 and 352 each coordinate UDP-N-acetyl-alpha-D-glucosamine. Residues alanine 355, 361–362 (NY), alanine 398, and arginine 415 contribute to the acetyl-CoA site.

This sequence in the N-terminal section; belongs to the N-acetylglucosamine-1-phosphate uridyltransferase family. In the C-terminal section; belongs to the transferase hexapeptide repeat family. As to quaternary structure, homotrimer. The cofactor is Mg(2+).

Its subcellular location is the cytoplasm. It catalyses the reaction alpha-D-glucosamine 1-phosphate + acetyl-CoA = N-acetyl-alpha-D-glucosamine 1-phosphate + CoA + H(+). It carries out the reaction N-acetyl-alpha-D-glucosamine 1-phosphate + UTP + H(+) = UDP-N-acetyl-alpha-D-glucosamine + diphosphate. Its pathway is nucleotide-sugar biosynthesis; UDP-N-acetyl-alpha-D-glucosamine biosynthesis; N-acetyl-alpha-D-glucosamine 1-phosphate from alpha-D-glucosamine 6-phosphate (route II): step 2/2. It functions in the pathway nucleotide-sugar biosynthesis; UDP-N-acetyl-alpha-D-glucosamine biosynthesis; UDP-N-acetyl-alpha-D-glucosamine from N-acetyl-alpha-D-glucosamine 1-phosphate: step 1/1. It participates in bacterial outer membrane biogenesis; LPS lipid A biosynthesis. Functionally, catalyzes the last two sequential reactions in the de novo biosynthetic pathway for UDP-N-acetylglucosamine (UDP-GlcNAc). The C-terminal domain catalyzes the transfer of acetyl group from acetyl coenzyme A to glucosamine-1-phosphate (GlcN-1-P) to produce N-acetylglucosamine-1-phosphate (GlcNAc-1-P), which is converted into UDP-GlcNAc by the transfer of uridine 5-monophosphate (from uridine 5-triphosphate), a reaction catalyzed by the N-terminal domain. This is Bifunctional protein GlmU from Anaplasma marginale (strain Florida).